A 98-amino-acid polypeptide reads, in one-letter code: NADH-ubiquinone oxidoreductase chain 4L (98 aa).

A run of 3 helical transmembrane segments spans residues 1 to 21 (MPVV…GLLI), 29 to 49 (SLLC…VTVL), and 61 to 81 (IILL…LVMV).

The protein belongs to the complex I subunit 4L family. As to quaternary structure, core subunit of respiratory chain NADH dehydrogenase (Complex I) which is composed of 45 different subunits.

The protein localises to the mitochondrion inner membrane. The enzyme catalyses a ubiquinone + NADH + 5 H(+)(in) = a ubiquinol + NAD(+) + 4 H(+)(out). Core subunit of the mitochondrial membrane respiratory chain NADH dehydrogenase (Complex I) which catalyzes electron transfer from NADH through the respiratory chain, using ubiquinone as an electron acceptor. Part of the enzyme membrane arm which is embedded in the lipid bilayer and involved in proton translocation. The chain is NADH-ubiquinone oxidoreductase chain 4L (MT-ND4L) from Helarctos malayanus (Malayan sun bear).